A 413-amino-acid chain; its full sequence is Enhanced ethylene response protein 5 (413 aa).

Residues 216–402 form the PCI domain; sequence VTYMYYTGRL…KVVVLSKQDP (187 aa).

As to quaternary structure, interacts with EIN2 (via C-terminus). May also interact weakly with CSN8. Interacts with DSS1(V), AMPD, SAC3A, SAC3B and At5g61290 (AC Q9FLK4). Interacts with UCH1 and UCH2. Interacts with NUP1, anchoring the TREX-2 complex on the nuclear pore complex. Expressed at low levels in roots, leaves, stems and shoots. Detected in seedlings, roots, leaves and anthers.

The protein localises to the nucleus. Its function is as follows. Involved in the regulation of ethylene response. Probable TREX-2 component required for nuclear RNA export. The TREX-2 complex (transcription and export complex 2) functions in docking export-competent ribonucleoprotein particles (mRNPs) to the nuclear entrance of the nuclear pore complex (nuclear basket). TREX-2 participates in mRNA export and accurate chromatin positioning in the nucleus by tethering genes to the nuclear periphery. The chain is Enhanced ethylene response protein 5 from Arabidopsis thaliana (Mouse-ear cress).